Here is a 263-residue protein sequence, read N- to C-terminus: Endonuclease 8 (263 aa).

P2 acts as the Schiff-base intermediate with DNA in catalysis. Residue E3 is the Proton donor of the active site. The Proton donor; for beta-elimination activity role is filled by K53. 3 residues coordinate DNA: Q70, R125, and N169. The segment at 229–263 (KVFHREGESCERCGGTIERTMLSSRPFYWCPHCQS) adopts an FPG-type zinc-finger fold. R253 acts as the Proton donor; for delta-elimination activity in catalysis.

The protein belongs to the FPG family. Requires Zn(2+) as cofactor.

The enzyme catalyses 2'-deoxyribonucleotide-(2'-deoxyribose 5'-phosphate)-2'-deoxyribonucleotide-DNA = a 3'-end 2'-deoxyribonucleotide-(2,3-dehydro-2,3-deoxyribose 5'-phosphate)-DNA + a 5'-end 5'-phospho-2'-deoxyribonucleoside-DNA + H(+). Involved in base excision repair of DNA damaged by oxidation or by mutagenic agents. Acts as a DNA glycosylase that recognizes and removes damaged bases. Has a preference for oxidized pyrimidines, such as thymine glycol, 5,6-dihydrouracil and 5,6-dihydrothymine. Has AP (apurinic/apyrimidinic) lyase activity and introduces nicks in the DNA strand. Cleaves the DNA backbone by beta-delta elimination to generate a single-strand break at the site of the removed base with both 3'- and 5'-phosphates. The sequence is that of Endonuclease 8 from Pectobacterium atrosepticum (strain SCRI 1043 / ATCC BAA-672) (Erwinia carotovora subsp. atroseptica).